The chain runs to 2186 residues: Non-reducing polyketide synthase men2 (2186 aa).

Residues 16–255 enclose the Starter acyltransferase (SAT) domain; sequence FFGDQTVDAL…MQLPLGTPAH (240 aa). Residues 382–815 enclose the Ketosynthase family 3 (KS3) domain; sequence SNLIAVVGQS…GGNNCVLLEE (434 aa). Active-site for beta-ketoacyl synthase activity residues include cysteine 554, histidine 690, and histidine 729. The Malonyl-CoA:ACP transacylase (MAT) domain occupies 914–1204; sequence VFAFTGQGAQ…SSLVKSTLSA (291 aa). A product template (PT) domain region spans residues 1299–1623; sequence TASLQQVRSE…TRRVLATVLG (325 aa). Residues 1303–1434 are N-terminal hotdog fold; sequence QQVRSEQING…CKLHFDKRGS (132 aa). Residues 1303–1619 enclose the PKS/mFAS DH domain; it reads QQVRSEQING…FQRLTRRVLA (317 aa). Residue histidine 1335 is the Proton acceptor; for dehydratase activity of the active site. The segment at 1463-1619 is C-terminal hotdog fold; it reads TGHRLPKSVV…FQRLTRRVLA (157 aa). Aspartate 1523 (proton donor; for dehydratase activity) is an active-site residue. The 77-residue stretch at 1666–1742 folds into the Carrier 1 domain; it reads VGDEKADAAI…GLRRAISELS (77 aa). Serine 1702 is modified (O-(pantetheine 4'-phosphoryl)serine). The tract at residues 1747–1785 is disordered; it reads GPASGSVSVSSSATTTHGMTTPSSTSSAQSSQSSQTPDG. A compositionally biased stretch (low complexity) spans 1749-1783; sequence ASGSVSVSSSATTTHGMTTPSSTSSAQSSQSSQTP. The Carrier 2 domain occupies 1784–1861; the sequence is DGPGIYANAV…HVRRALGSDS (78 aa). Serine 1821 is modified (O-(pantetheine 4'-phosphoryl)serine). Positions 1857–1878 are disordered; the sequence is LGSDSDGDSKPKSAPAPPAPEP. The thioesterase (TE) domain stretch occupies residues 1921–2163; that stretch reads LFFLPDGTGY…TMPCDHLSLL (243 aa).

It depends on pantetheine 4'-phosphate as a cofactor.

It participates in secondary metabolite biosynthesis. Its function is as follows. Non-reducing polyketide synthase; part of the gene cluster that mediates the biosynthesis of menisporopsin A, a bioactive macrocyclic polylactone. The biosynthesis of menisporopsin A is performed by a reducing (man1) and a non-reducing (men2) polyketide synthase that catalyze the formation of each menisporopsin A subunits, while the esterification and cyclolactonization activities are probably peformed by the unusual thioesterase domain of men2. First, a reduced diketide intermediate, 3-hydroxybutyryl-S-ACP is produced by men1 and transferred to men2; this is followed by a second reduced diketide which is further elongated using 3 units of malonyl-coA to form a reduced pentaketide. The cyclization of this intermediate by the PT domain forms the second subunit, 2,4-dihydroxy-6-(2-hydroxy-n-propyl)benzoyl-S-ACP. The TE domain of men2 then esterifies the secondary hydroxyl group on the side chain of the second subunit with the acyl-TE of the first subunit to form the first ester intermediate. This process occurs iteratively to form a linear tetraester intermediate. The final subunit is formed by a similar process, except that an extra malonyl-CoA is required in an additional elongation step to form a reduced hexaketide intermediate, and the carbonyl group next to the secondary hydroxyl group is reduced by a trans-acting ketoreductase. Again, the PT domain catalyzes cyclization to form the largest subunit, 2,4-dihydroxy-6-(2,4-dihydroxy-n-pentyl) benzoyl-S-ACP. Then the linear pentaester intermediate is formed. In this step, if the intermediate transfer rate is slow, intra- molecular cyclization involving the secondary hydroxyl group of the pentaester intermediate may occur to form menisporopsin B. Alternatively, transfer of the pentaester intermediate to the TE domain would allow cyclolactonization to be catalyzed by the TE to form menisporopsin A. In Menisporopsis theobromae, this protein is Non-reducing polyketide synthase men2.